The sequence spans 93 residues: Phosphoribosyl-ATP pyrophosphatase (93 aa).

It belongs to the PRA-PH family.

Its subcellular location is the cytoplasm. It carries out the reaction 1-(5-phospho-beta-D-ribosyl)-ATP + H2O = 1-(5-phospho-beta-D-ribosyl)-5'-AMP + diphosphate + H(+). The protein operates within amino-acid biosynthesis; L-histidine biosynthesis; L-histidine from 5-phospho-alpha-D-ribose 1-diphosphate: step 2/9. The chain is Phosphoribosyl-ATP pyrophosphatase from Mycolicibacterium gilvum (strain PYR-GCK) (Mycobacterium gilvum (strain PYR-GCK)).